We begin with the raw amino-acid sequence, 159 residues long: Ribosomal RNA large subunit methyltransferase H (159 aa).

S-adenosyl-L-methionine-binding positions include Leu76, Gly108, and 127–132; that span reads FSKMTF.

The protein belongs to the RNA methyltransferase RlmH family. Homodimer.

Its subcellular location is the cytoplasm. It catalyses the reaction pseudouridine(1915) in 23S rRNA + S-adenosyl-L-methionine = N(3)-methylpseudouridine(1915) in 23S rRNA + S-adenosyl-L-homocysteine + H(+). In terms of biological role, specifically methylates the pseudouridine at position 1915 (m3Psi1915) in 23S rRNA. The polypeptide is Ribosomal RNA large subunit methyltransferase H (Geobacillus thermodenitrificans (strain NG80-2)).